Here is a 380-residue protein sequence, read N- to C-terminus: O-phospho-L-seryl-tRNA:Cys-tRNA synthase (380 aa).

Pyridoxal 5'-phosphate contacts are provided by residues 86-87 (AR), asparagine 192, and 215-217 (SGH). Lysine 218 bears the N6-(pyridoxal phosphate)lysine mark.

This sequence belongs to the SepCysS family. As to quaternary structure, homodimer. Interacts with SepRS. Pyridoxal 5'-phosphate serves as cofactor.

The catalysed reaction is O-phospho-L-seryl-tRNA(Cys) + hydrogen sulfide + H(+) = L-cysteinyl-tRNA(Cys) + phosphate. Functionally, converts O-phospho-L-seryl-tRNA(Cys) (Sep-tRNA(Cys)) to L-cysteinyl-tRNA(Cys) (Cys-tRNA(Cys)). This chain is O-phospho-L-seryl-tRNA:Cys-tRNA synthase, found in Methanococcus maripaludis (strain C5 / ATCC BAA-1333).